Here is a 785-residue protein sequence, read N- to C-terminus: Polyribonucleotide nucleotidyltransferase (785 aa).

2 residues coordinate Mg(2+): Asp-516 and Asp-522. The KH domain maps to 582–641 (PRVTTVKIPVDKIGMVIGPKGQTINAIQDETGAEISIEDDGTIYVGATNGPAAQAAVERI). An S1 motif domain is found at 653-722 (GDRFLGTVVK…QRGKIYLDKV (70 aa)). The tract at residues 722–785 (VRPEGAEAPA…SRPRRRTRRS (64 aa)) is disordered. Basic and acidic residues predominate over residues 734 to 764 (AAERPAGRDRGDRGPRDRGDRGGRGPDRGDS).

The protein belongs to the polyribonucleotide nucleotidyltransferase family. Mg(2+) is required as a cofactor.

The protein localises to the cytoplasm. It carries out the reaction RNA(n+1) + phosphate = RNA(n) + a ribonucleoside 5'-diphosphate. Involved in mRNA degradation. Catalyzes the phosphorolysis of single-stranded polyribonucleotides processively in the 3'- to 5'-direction. The chain is Polyribonucleotide nucleotidyltransferase from Salinispora tropica (strain ATCC BAA-916 / DSM 44818 / JCM 13857 / NBRC 105044 / CNB-440).